A 147-amino-acid polypeptide reads, in one-letter code: Large ribosomal subunit protein uL15 (147 aa).

The interval 1-57 (MRLHDVKPQKGSKKRKKRVARGISAGQGASAGLGMRGQKSRSGSGTRPGFEGGQQPL) is disordered. The span at 10–20 (KGSKKRKKRVA) shows a compositional bias: basic residues.

This sequence belongs to the universal ribosomal protein uL15 family. In terms of assembly, part of the 50S ribosomal subunit.

In terms of biological role, binds to the 23S rRNA. This is Large ribosomal subunit protein uL15 from Nostoc punctiforme (strain ATCC 29133 / PCC 73102).